A 557-amino-acid chain; its full sequence is Potassium-transporting ATPase potassium-binding subunit (557 aa).

12 consecutive transmembrane segments (helical) span residues Gly5–Ser25, Leu63–Gly83, Gly132–Ile152, Leu170–Ile190, Phe253–Val273, Leu283–Val303, Val329–Ala349, Ala356–Val376, Gly379–Gly399, Leu416–Met436, Leu484–Ala504, and Leu526–Ala546.

This sequence belongs to the KdpA family. As to quaternary structure, the system is composed of three essential subunits: KdpA, KdpB and KdpC.

It localises to the cell inner membrane. In terms of biological role, part of the high-affinity ATP-driven potassium transport (or Kdp) system, which catalyzes the hydrolysis of ATP coupled with the electrogenic transport of potassium into the cytoplasm. This subunit binds the periplasmic potassium ions and delivers the ions to the membrane domain of KdpB through an intramembrane tunnel. This is Potassium-transporting ATPase potassium-binding subunit from Escherichia coli (strain SE11).